The following is a 523-amino-acid chain: Peptidyl-prolyl cis-trans isomerase 4 (523 aa).

A U-box domain is found at 38 to 111 (KRLPINHCSL…GKFRCPVTFR (74 aa)). The 156-residue stretch at 278 to 433 (KNAFVRLVTN…VSVVIMRAEV (156 aa)) folds into the PPIase cyclophilin-type domain.

The protein belongs to the cyclophilin-type PPIase family. PPIL2 subfamily. In terms of assembly, interacts with mep-1. Exclusively in the larval body wall striated muscle cells.

It localises to the nucleus. It catalyses the reaction [protein]-peptidylproline (omega=180) = [protein]-peptidylproline (omega=0). The enzyme catalyses S-ubiquitinyl-[E2 ubiquitin-conjugating enzyme]-L-cysteine + [acceptor protein]-L-lysine = [E2 ubiquitin-conjugating enzyme]-L-cysteine + N(6)-ubiquitinyl-[acceptor protein]-L-lysine.. It functions in the pathway protein modification; protein ubiquitination. In terms of biological role, may catalyze the cis-trans isomerization of proline imidic peptide bonds in oligopeptides thereby assisting the folding of proteins. May also function as a chaperone, playing a role in intracellular transport of proteins. May also have a protein ubiquitin ligase activity acting as an E3 ubiquitin protein ligase or as a ubiquitin-ubiquitin ligase promoting elongation of ubiquitin chains on proteins. Influences the hermaphrodite switch from spermatogenesis to oogenesis. Required for body wall muscle cell development. The protein is Peptidyl-prolyl cis-trans isomerase 4 (cyn-4) of Caenorhabditis elegans.